The following is a 241-amino-acid chain: MASNGESKHSEVGHKSLLQSDALYQYILETSVYPREPEAMKELREVTAKHPWNLMTTSADEGQFLNMLLKLINAKNTMEIGVYTGYSLLATALALPDDGKILAMDINRENYEIGLPIIEKAGVGHKIDFREGPALPVLDHMLEDGKYHGTFDFVFVDADKDNYINYHKRLIDLVKIGGLIGYDNTLWNGSVAQPADAPMRKYVRYYRDFVIELNKALAADPRIEICMLPVGDGVTLCRRIS.

A Blocked amino end (Met) modification is found at methionine 1. Residue lysine 15 participates in substrate binding. S-adenosyl-L-methionine is bound by residues threonine 57, glutamate 79, glycine 81 to valine 82, serine 87, aspartate 105, and alanine 134. Residue aspartate 157 coordinates substrate. Aspartate 157 contacts a divalent metal cation. Position 159 (aspartate 159) interacts with S-adenosyl-L-methionine. Aspartate 183 and asparagine 184 together coordinate a divalent metal cation. Residue asparagine 188 coordinates substrate.

Belongs to the class I-like SAM-binding methyltransferase superfamily. Cation-dependent O-methyltransferase family. CCoAMT subfamily. As to quaternary structure, homodimer. A divalent metal cation serves as cofactor. In terms of tissue distribution, roots and leaves.

The catalysed reaction is (E)-caffeoyl-CoA + S-adenosyl-L-methionine = (E)-feruloyl-CoA + S-adenosyl-L-homocysteine + H(+). The protein operates within aromatic compound metabolism; phenylpropanoid biosynthesis. Methylates caffeoyl-CoA to feruloyl-CoA and 5-hydroxyferuloyl-CoA to sinapoyl-CoA. Plays a role in the synthesis of feruloylated polysaccharides. Involved in the reinforcement of the plant cell wall. Also involved in the responding to wounding or pathogen challenge by the increased formation of cell wall-bound ferulic acid polymers. The sequence is that of Caffeoyl-CoA O-methyltransferase from Petroselinum crispum (Parsley).